A 773-amino-acid polypeptide reads, in one-letter code: Acyl-homoserine lactone acylase PvdQ (773 aa).

The signal sequence occupies residues 1–23 (MSRALPGFLFAGLSVAVVLPAQA). Residues 200–221 (SQQVQALQLAAARNERFALERG) constitute a propeptide, spacer peptide. Ser-222 (nucleophile) is an active-site residue.

The protein belongs to the peptidase S45 family. In terms of assembly, heterodimer of an alpha subunit and a beta subunit processed from the same precursor.

The protein localises to the periplasm. It carries out the reaction an N-acyl-L-homoserine lactone + H2O = L-homoserine lactone + a carboxylate. Functionally, catalyzes the deacylation of acyl-homoserine lactone (AHL or acyl-HSL), releasing homoserine lactone (HSL) and the corresponding fatty acid. Possesses a specificity for the degradation of long-chain acyl-HSLs (side chains of 11 to 14 carbons in length). This Pseudomonas syringae pv. tomato (strain ATCC BAA-871 / DC3000) protein is Acyl-homoserine lactone acylase PvdQ (pvdQ).